A 298-amino-acid polypeptide reads, in one-letter code: Arginine/serine-rich protein 1 (298 aa).

Residues 1–135 (MSSAAMSKYV…SRSRSRGRSQ (135 aa)) form a disordered region. Ser-17 bears the Phosphoserine mark. The segment covering 23-36 (SPSTSGSGRSSRLS) has biased composition (low complexity). Residues 60-105 (SRSHSRPRRSRRSRSRSRRRHQRKYRRYSRSYSRSRSRSRSHRYHR) show a composition bias toward basic residues. Residues Ser-118 and Ser-120 each carry the phosphoserine modification. The segment covering 124 to 135 (SRSRSRSRGRSQ) has biased composition (basic residues). Residue Arg-145 is modified to Omega-N-methylarginine. 2 disordered regions span residues 161-181 (RPRWRERSRTRSRSRSRTPFR) and 218-298 (ASQG…WIPV). The span at 219–228 (SQGTAVSSSG) shows a compositional bias: polar residues. The span at 230–246 (KVEHSEKQTEDATKNTS) shows a compositional bias: basic and acidic residues. Residues 247 to 271 (EKSSTQRNIAFSSNNSVAKPLQKTT) are compositionally biased toward polar residues. Positions 274-289 (AVEEKSSGSPKIDKKK) are enriched in basic and acidic residues. At Ser-282 the chain carries Phosphoserine.

It belongs to the RSRP family. Post-translationally, phosphorylated. Phosphorylation at Ser-118 and Ser-120 mediates the interaction with spliceosome proteins.

Its subcellular location is the nucleus. In terms of biological role, probably acts as a spliceosomal factor that contributes to spliceosome assembly and regulates the isoform switching of proteins such as PARP6. This is Arginine/serine-rich protein 1 (Rsrp1) from Mus musculus (Mouse).